A 108-amino-acid polypeptide reads, in one-letter code: Small ribosomal subunit protein uS17 (108 aa).

It belongs to the universal ribosomal protein uS17 family. As to quaternary structure, part of the 30S ribosomal subunit.

In terms of biological role, one of the primary rRNA binding proteins, it binds specifically to the 5'-end of 16S ribosomal RNA. The chain is Small ribosomal subunit protein uS17 from Methanoregula boonei (strain DSM 21154 / JCM 14090 / 6A8).